A 407-amino-acid chain; its full sequence is Aurofusarin biosynthesis cluster protein S (407 aa).

The first 35 residues, 1 to 35 (MSKQKPSLWRALRALSFIISIPLLIQYLVLKWYST), serve as a signal peptide directing secretion. 5 N-linked (GlcNAc...) asparagine glycosylation sites follow: Asn-52, Asn-174, Asn-196, Asn-274, and Asn-312. 2 FAS1 domains span residues 52-192 (NLTV…DTVL) and 195-365 (PNST…DSIL).

In terms of assembly, might be part of an extracellular enzyme complex composed of GIP1, aurF, aurO and aurS.

The protein resides in the secreted. Its subcellular location is the extracellular space. It participates in pigment biosynthesis. In terms of biological role, part of the gene cluster that mediates the biosynthesis of aurofusarin, a red mycelium pigment which is acting as a mycotoxin. The first step is performed by the polyketide synthase which condenses one acetyl-CoA and 6 malonyl-CoA units to form the first intermediate, the cyclic heptaketide and yellow pigment YWA1. The C2 hydroxyl group in the pyrone ring of YWA1 is probably formed during ring closure by an aldol-type cyclization reaction. The dehydratase aurZ then acts as the first tailoring enzyme in the aurofusarin biosynthetic pathway by converting YWA1 to nor-rubrofusarin. Nor-rubrofusarin is then methylated to rubrofusarin by the O-methyltransferase aurJ. Rubrofusarin is then transported across the plasma membrane by the rubrofusarin-specific pump aurT for further enzymatic processing by the extracellular complex composed of GIP1, aurF, aurO and aurS to yield aurofusarin. This chain is Aurofusarin biosynthesis cluster protein S, found in Gibberella zeae (strain ATCC MYA-4620 / CBS 123657 / FGSC 9075 / NRRL 31084 / PH-1) (Wheat head blight fungus).